The primary structure comprises 684 residues: Protein SEEDLING PLASTID DEVELOPMENT 1 (684 aa).

The N-terminal 78 residues, 1–78 (MRALNSRLVL…FSFDVRSPSS (78 aa)), are a transit peptide targeting the chloroplast. A disordered region spans residues 33–91 (SDSSSSFRRTRGARQRIASSKSPASSPSPVRRPSDGFSFDVRSPSSDSSISSRKSPTTA). Residues 50-88 (ASSKSPASSPSPVRRPSDGFSFDVRSPSSDSSISSRKSP) are compositionally biased toward low complexity. Position 220 to 227 (220 to 227 (GSPGVGKT)) interacts with ATP. A disordered region spans residues 651–684 (PRRSTKKTLTSSSPQKSADGSMGTTGTRLPFLKD). Low complexity predominate over residues 657–667 (KTLTSSSPQKS).

The protein belongs to the ycf45 family.

It is found in the plastid. The protein resides in the chloroplast membrane. The protein localises to the chloroplast envelope. Required during eoplast (a highly reduced plastid type present during the degreening and dehydration stages of seed maturation) development in embryos and early stages of eoplast redifferentiation during seedling growth. This Arabidopsis thaliana (Mouse-ear cress) protein is Protein SEEDLING PLASTID DEVELOPMENT 1.